A 99-amino-acid chain; its full sequence is Aspartyl/glutamyl-tRNA(Asn/Gln) amidotransferase subunit C (99 aa).

This sequence belongs to the GatC family. Heterotrimer of A, B and C subunits.

The enzyme catalyses L-glutamyl-tRNA(Gln) + L-glutamine + ATP + H2O = L-glutaminyl-tRNA(Gln) + L-glutamate + ADP + phosphate + H(+). The catalysed reaction is L-aspartyl-tRNA(Asn) + L-glutamine + ATP + H2O = L-asparaginyl-tRNA(Asn) + L-glutamate + ADP + phosphate + 2 H(+). Allows the formation of correctly charged Asn-tRNA(Asn) or Gln-tRNA(Gln) through the transamidation of misacylated Asp-tRNA(Asn) or Glu-tRNA(Gln) in organisms which lack either or both of asparaginyl-tRNA or glutaminyl-tRNA synthetases. The reaction takes place in the presence of glutamine and ATP through an activated phospho-Asp-tRNA(Asn) or phospho-Glu-tRNA(Gln). This is Aspartyl/glutamyl-tRNA(Asn/Gln) amidotransferase subunit C from Paraburkholderia phytofirmans (strain DSM 17436 / LMG 22146 / PsJN) (Burkholderia phytofirmans).